The chain runs to 539 residues: MALATNSAAVSGGAAAAASSAPQPRLAATFLPMRRRTVSAVHAADPAKSNGPVQAAAKASSPSTVAAPEKKPVGLGKWTVDSWKAKKALQLPEYPSQEELDSVLKTIETFPPVVFAGEARHLEERLADAAMGRAFVLQGGDCAESFKEFNANNIRDTFRILLQMGAVLMFGGQMPVVKVVGRMAGQFAKPRSDSFEERDGVKLPSYRGDNINGDTFDEKSRVPDPQRMIRAYAQSVATLNLLRAFATGGYAAMQRVTQWNLDFMDHSEQGDRRYRELAHRVDEALGFMTAAGLTVDHPIMTTTDFWTSHECLLLPYEQSLTREDSTSGLFYDCSAHMLWVGERTRQLDGAHVEFLRGVANPLGIKVSDKMNPRDLVKLIEILNPSNKPGRITIITRMGAENMRVKLPHLIRAVRNSGQIVTWITDPMHGNTIKAPCGLKTRPFDSILAEVRAFFDVHDQEGSHPGGIHLEMTGQNVTECIGGSRTVTFDDLSDRYHTHCDPRLNASQSLELAFIIAERLRRRRMRSGVNSNLPLPPLAF.

Disordered regions lie at residues Met-1–Gln-23 and Val-41–Lys-70. A chloroplast-targeting transit peptide spans Met-1–Gln-54. The span at Ser-7–Ala-21 shows a compositional bias: low complexity.

It belongs to the class-II DAHP synthase family.

The protein localises to the plastid. It localises to the chloroplast. It catalyses the reaction D-erythrose 4-phosphate + phosphoenolpyruvate + H2O = 7-phospho-2-dehydro-3-deoxy-D-arabino-heptonate + phosphate. Its pathway is metabolic intermediate biosynthesis; chorismate biosynthesis; chorismate from D-erythrose 4-phosphate and phosphoenolpyruvate: step 1/7. In Oryza sativa subsp. japonica (Rice), this protein is Phospho-2-dehydro-3-deoxyheptonate aldolase 2, chloroplastic (DAHPS2).